The following is a 299-amino-acid chain: MMEIDLQKTFTWKIENFSGRKFPITSTVFSSGGCECYVLIRPKGDGFEDYLSLYLCVGNPKSLQPGWKRRASLHFIVLNQSGKEVHRTSERYGLFGPEIPGWGFRTALPLTKLQDRELLENNTLFIEVYIKVTEVVHEGDETRKDMLDFKGFNVLSSQIASVSPIFAKYPKFADDIKPTSKAVKTVYLKILLGLIKTVNKPPEIFSETELIKAYSSLIDLMEVGFRVKWLKSKLDEISLARKKKVDADAARVQELEGKVKNQVELDKEKTKSHVEPKMLSFKDYASPVSPWIPRRKRSD.

The region spanning 7 to 130 is the MATH domain; that stretch reads QKTFTWKIEN…NNTLFIEVYI (124 aa). Residues 225–262 are a coiled coil; that stretch reads FRVKWLKSKLDEISLARKKKVDADAARVQELEGKVKNQ.

The polypeptide is MATH domain and coiled-coil domain-containing protein At2g42460 (Arabidopsis thaliana (Mouse-ear cress)).